The following is a 240-amino-acid chain: Enolase-phosphatase E1 (240 aa).

Belongs to the HAD-like hydrolase superfamily. MasA/MtnC family. Monomer. Mg(2+) is required as a cofactor.

It carries out the reaction 5-methylsulfanyl-2,3-dioxopentyl phosphate + H2O = 1,2-dihydroxy-5-(methylsulfanyl)pent-1-en-3-one + phosphate. It functions in the pathway amino-acid biosynthesis; L-methionine biosynthesis via salvage pathway; L-methionine from S-methyl-5-thio-alpha-D-ribose 1-phosphate: step 3/6. It participates in amino-acid biosynthesis; L-methionine biosynthesis via salvage pathway; L-methionine from S-methyl-5-thio-alpha-D-ribose 1-phosphate: step 4/6. In terms of biological role, bifunctional enzyme that catalyzes the enolization of 2,3-diketo-5-methylthiopentyl-1-phosphate (DK-MTP-1-P) into the intermediate 2-hydroxy-3-keto-5-methylthiopentenyl-1-phosphate (HK-MTPenyl-1-P), which is then dephosphorylated to form the acireductone 1,2-dihydroxy-3-keto-5-methylthiopentene (DHK-MTPene). This chain is Enolase-phosphatase E1, found in Saccharopolyspora erythraea (strain ATCC 11635 / DSM 40517 / JCM 4748 / NBRC 13426 / NCIMB 8594 / NRRL 2338).